A 412-amino-acid polypeptide reads, in one-letter code: MNKHPWKNQLSEMVQPSGGPAEDQDMLGEESSLGKPAMLHLPSEQGTPETLQRCLEENQELRDAIRQSNQMLRERCEELLHFQVSQREEKEFLMCKFQEARKLVERLSLEKLDLRSQREQALKELEQLKKCQQQMAEDKASVKAQVTSLLGELQESQSRLEAATKDRQALEGRIRAVSEQVRQLESEREVLQQQHSVQVDQLRMQNQSVEAALRMERQAASEEKRKLAQLQAAYHQLFQDYDSHIKSSKGMQLEDLRQQLQQAEEALVAKQELIDKLKEEAEQHKIVMETVPVLKAQADIYKADFQAERHAREKLVEKKEYLQEQLEQLQREFNKLKVGCHESARIEDMRKRHVETPQPPLLPAPAHHSFHLALSNQRRSPPEEPPDFCCPKCQYQAPDMDTLQIHVMECIE.

Residues 1-48 (MNKHPWKNQLSEMVQPSGGPAEDQDMLGEESSLGKPAMLHLPSEQGTP) form a disordered region. The tract at residues 1-197 (MNKHPWKNQL…REVLQQQHSV (197 aa)) is required for interaction with and ubiquitination by MARCHF2. 2 positions are modified to phosphoserine; by IKKB: serine 31 and serine 43. Positions 44-111 (EQGTPETLQR…KLVERLSLEK (68 aa)) are interaction with CHUK/IKBKB. Residues 49–345 (ETLQRCLEEN…LKVGCHESAR (297 aa)) are a coiled coil. Serine 68 bears the Phosphoserine mark. Serine 85 is modified (phosphoserine; by ATM). Glycyl lysine isopeptide (Lys-Gly) (interchain with G-Cter in ubiquitin) cross-links involve residues lysine 111, lysine 139, lysine 143, lysine 226, and lysine 246. Positions 150–250 (LGELQESQSR…YDSHIKSSKG (101 aa)) are interaction with TANK. Residues 242 to 343 (DSHIKSSKGM…NKLKVGCHES (102 aa)) are ubiquitin-binding (UBAN). Positions 246–358 (KSSKGMQLED…MRKRHVETPQ (113 aa)) are self-association. Residues 249 to 412 (KGMQLEDLRQ…LQIHVMECIE (164 aa)) form a required for interaction with TNFAIP3 region. Residues 250–339 (GMQLEDLRQQ…QREFNKLKVG (90 aa)) are linear polyubiquitin-binding, does not bind to 'Lys-63'-linked polyubiquitin. A Glycyl lysine isopeptide (Lys-Gly) (interchain with G-Cter in SUMO); alternate cross-link involves residue lysine 270. Lysine 270 participates in a covalent cross-link: Glycyl lysine isopeptide (Lys-Gly) (interchain with G-Cter in ubiquitin); alternate. Glycyl lysine isopeptide (Lys-Gly) (interchain with G-Cter in ubiquitin) cross-links involve residues lysine 276, lysine 278, lysine 285, and lysine 295. Residue lysine 302 forms a Glycyl lysine isopeptide (Lys-Gly) (interchain with G-Cter in SUMO); alternate linkage. Residue lysine 302 forms a Glycyl lysine isopeptide (Lys-Gly) (interchain with G-Cter in ubiquitin); alternate linkage. Glycyl lysine isopeptide (Lys-Gly) (interchain with G-Cter in ubiquitin) cross-links involve residues lysine 314, lysine 318, and lysine 319. A leucine-zipper region spans residues 315-336 (LVEKKEYLQEQLEQLQREFNKL). Serine 369 bears the Phosphoserine; by IKKB mark. An interaction with CYLD region spans residues 375-412 (SNQRRSPPEEPPDFCCPKCQYQAPDMDTLQIHVMECIE). Serine 380 carries the post-translational modification Phosphoserine. Residues 382–412 (PEEPPDFCCPKCQYQAPDMDTLQIHVMECIE) form a CCHC NOA-type zinc finger. Zn(2+) is bound at residue cysteine 390. Lysine 392 participates in a covalent cross-link: Glycyl lysine isopeptide (Lys-Gly) (interchain with G-Cter in ubiquitin). Zn(2+) contacts are provided by cysteine 393, histidine 406, and cysteine 410.

As to quaternary structure, homodimer; disulfide-linked. Component of the I-kappa-B-kinase (IKK) core complex consisting of CHUK, IKBKB and IKBKG; probably four alpha/CHUK-beta/IKBKB dimers are associated with four gamma/IKBKG subunits. The IKK core complex seems to associate with regulatory or adapter proteins to form a IKK-signalosome holo-complex. The IKK complex associates with TERF2IP/RAP1, leading to promote IKK-mediated phosphorylation of RELA/p65. Part of a complex composed of NCOA2, NCOA3, CHUK/IKKA, IKBKB, IKBKG and CREBBP. Interacts with COPS3, CYLD, NALP2, TRPC4AP and PIDD1. Interacts with ATM; the complex is exported from the nucleus. Interacts with TRAF6. Interacts with IKBKE. Interacts with TANK; the interaction is enhanced by IKBKE and TBK1. Part of a ternary complex consisting of TANK, IKBKB and IKBKG. Interacts with ZFAND5. Interacts with RIPK2. Interacts with TNIP1 and TNFAIP3; TNIP1 facilitates the TNFAIP3-mediated de-ubiquitination of IKBKG. Interacts with TNFAIP3; the interaction is induced by TNF stimulation and by polyubiquitin. Binds (via UBAN region) polyubiquitin; binds both 'Lys-63'-linked and linear polyubiquitin, with higher affinity for linear ubiquitin. Interacts with NLRP10. Interacts with TANK; this interaction increases in response to DNA damage. Interacts with USP10; this interaction increases in response to DNA damage. Interacts with ZC3H12A; this interaction increases in response to DNA damage. Interacts with IFIT5; the interaction synergizes the recruitment of IKK to MAP3K7 and enhances IKK phosphorylation. Interacts with TRIM29; this interaction induces IKBKG/NEMO ubiquitination and proteolytic degradation. Interacts with TRIM13; this interaction leads to IKBKG/NEMO ubiquitination. Interacts with ARFIP2. Interacts with RIPK1. Interacts with (ubiquitinated) BCL10; interaction with polyubiquitinated BCL10 via both 'Lys-63'-linked and linear ubiquitin is required for TCR-induced NF-kappa-B activation. Interacts with MARCHF2; during the late stages of macrophage viral and bacterial infection; the interaction leads to ubiquitination and degradation of IKBKG/NEMO. Phosphorylation at Ser-68 attenuates aminoterminal homodimerization. In terms of processing, polyubiquitinated on Lys-278 via 'Lys-63'-linked ubiquitin; the ubiquitination is mediated downstream of NOD2 and RIPK2 and probably plays a role in signaling by facilitating interactions with ubiquitin domain-containing proteins and activates the NF-kappa-B pathway. Polyubiquitinated on Lys-278 and Lys-302 through 'Lys-63'-linked ubiquitin; the ubiquitination is mediated by BCL10, MALT1 and TRAF6 and probably plays a role in signaling by facilitating interactions with ubiquitin domain-containing proteins and activates the NF-kappa-B pathway. Monoubiquitinated on Lys-270 and Lys-302; promotes nuclear export. Polyubiquitinated through 'Lys-27' by TRIM23; involved in antiviral innate and inflammatory responses. Linear polyubiquitinated on Lys-111, Lys-143, Lys-226, Lys-246, Lys-270, Lys-278, Lys-285, Lys-295, Lys-302 and Lys-319; the head-to-tail polyubiquitination is mediated by the LUBAC complex and plays a key role in NF-kappa-B activation. Deubiquitinated by USP10 in a TANK-dependent and -independent manner, leading to the negative regulation of NF-kappa-B signaling upon DNA damage. Ubiquitinated at Lys-319 by MARCHF2 following bacterial and viral infection which leads to its degradation. Polyubiquitinated via 'Lys-29'-linked ubiquitin; leading to lysosomal degradation. Post-translationally, sumoylated on Lys-270 and Lys-302 with SUMO1; the modification results in phosphorylation of Ser-85 by ATM leading to a replacement of the sumoylation by mono-ubiquitination on these residues. Neddylated by TRIM40, resulting in stabilization of NFKBIA and down-regulation of NF-kappa-B activity.

It localises to the cytoplasm. It is found in the nucleus. Functionally, regulatory subunit of the IKK core complex which phosphorylates inhibitors of NF-kappa-B thus leading to the dissociation of the inhibitor/NF-kappa-B complex and ultimately the degradation of the inhibitor. Its binding to scaffolding polyubiquitin plays a key role in IKK activation by multiple signaling receptor pathways. Can recognize and bind both 'Lys-63'-linked and linear polyubiquitin upon cell stimulation, with a much highr affinity for linear polyubiquitin. Could be implicated in NF-kappa-B-mediated protection from cytokine toxicity. Essential for viral activation of IRF3. Involved in TLR3- and IFIH1-mediated antiviral innate response; this function requires 'Lys-27'-linked polyubiquitination. The chain is NF-kappa-B essential modulator (Ikbkg) from Mus musculus (Mouse).